The chain runs to 856 residues: Paladin (856 aa).

Over residues 1–16 the composition is skewed to low complexity; that stretch reads MGTTASTAQQTVSAGT. Positions 1 to 29 are disordered; that stretch reads MGTTASTAQQTVSAGTPFEGLQGSGTMDS. The N-myristoyl glycine moiety is linked to residue glycine 2. Phosphoserine is present on serine 86.

This sequence belongs to the paladin family. In terms of tissue distribution, expressed in endothelial cells, and in certain larger vessels, in mural cells. In the brain, possibly expressed in microglia. Expressed in peripheral blood mononuclear cells (at protein level).

It is found in the cytoplasm. The protein localises to the cytosol. The chain is Paladin (PALD1) from Homo sapiens (Human).